Here is a 279-residue protein sequence, read N- to C-terminus: Tryptophan prenyltransferase ComQ (279 aa).

Mg(2+)-binding residues include aspartate 67 and aspartate 71.

This sequence belongs to the FPP/GGPP synthase family. Mg(2+) serves as cofactor.

The protein resides in the cell membrane. The enzyme catalyses L-tryptophyl-[protein] + (2E)-geranyl diphosphate = (2S,3R)-3-geranyl-2,3-dihydro-2,N(alpha)-cyclo-L-tryptophyl-[protein] + diphosphate. Part of a major quorum-sensing system that regulates the development of genetic competence. Involved in the maturation of the competence pheromone ComX. Acts by catalyzing the transfer of a geranyl group on the ComX pheromone. Cannot use farnesyl diphosphate (FPP). The chain is Tryptophan prenyltransferase ComQ from Bacillus spizizenii (Bacillus subtilis subsp. spizizenii).